The sequence spans 369 residues: Anhydro-N-acetylmuramic acid kinase (369 aa).

12–19 (GTSMDGVD) is a binding site for ATP.

This sequence belongs to the anhydro-N-acetylmuramic acid kinase family.

The catalysed reaction is 1,6-anhydro-N-acetyl-beta-muramate + ATP + H2O = N-acetyl-D-muramate 6-phosphate + ADP + H(+). It functions in the pathway amino-sugar metabolism; 1,6-anhydro-N-acetylmuramate degradation. Its pathway is cell wall biogenesis; peptidoglycan recycling. Functionally, catalyzes the specific phosphorylation of 1,6-anhydro-N-acetylmuramic acid (anhMurNAc) with the simultaneous cleavage of the 1,6-anhydro ring, generating MurNAc-6-P. Is required for the utilization of anhMurNAc either imported from the medium or derived from its own cell wall murein, and thus plays a role in cell wall recycling. The protein is Anhydro-N-acetylmuramic acid kinase of Shewanella baltica (strain OS185).